We begin with the raw amino-acid sequence, 249 residues long: MILELDCGNSFIKWRITAKNDAAVISGGVVGSDAALLMHLSNLPDTSFTDCRLVSVRSAEETARLVSLLADTFSVAPVCAEPAQELAGVINGYDDFARLGLDRWLAFVGAYHLARSACLVIDLGTAVTSDFVDAGGAHLGGFICPGMPLMRNQLRTHTRRIRYDDTEAEKALARLVPGRATAEAVERGCSLMLRGFALTQIEIAQGYWGNDFAIFVTGGDAALVADVLPGARIVPDLVFVGLALACPLR.

6–13 (DCGNSFIK) contacts ATP. Substrate is bound by residues tyrosine 93 and 100–103 (GLDR). The active-site Proton acceptor is the aspartate 102. Aspartate 122 provides a ligand contact to K(+). Threonine 125 is a binding site for ATP. Threonine 181 contacts substrate.

Belongs to the type III pantothenate kinase family. In terms of assembly, homodimer. NH4(+) is required as a cofactor. Requires K(+) as cofactor.

It localises to the cytoplasm. It carries out the reaction (R)-pantothenate + ATP = (R)-4'-phosphopantothenate + ADP + H(+). The protein operates within cofactor biosynthesis; coenzyme A biosynthesis; CoA from (R)-pantothenate: step 1/5. In terms of biological role, catalyzes the phosphorylation of pantothenate (Pan), the first step in CoA biosynthesis. The protein is Type III pantothenate kinase of Pseudomonas savastanoi pv. phaseolicola (strain 1448A / Race 6) (Pseudomonas syringae pv. phaseolicola (strain 1448A / Race 6)).